We begin with the raw amino-acid sequence, 172 residues long: Small ribosomal subunit protein uS5 (172 aa).

The S5 DRBM domain maps to 17–80 (LREKMISVNR…EQARRNMFKV (64 aa)).

This sequence belongs to the universal ribosomal protein uS5 family. As to quaternary structure, part of the 30S ribosomal subunit. Contacts proteins S4 and S8.

Functionally, with S4 and S12 plays an important role in translational accuracy. Its function is as follows. Located at the back of the 30S subunit body where it stabilizes the conformation of the head with respect to the body. In Burkholderia pseudomallei (strain 1106a), this protein is Small ribosomal subunit protein uS5.